The primary structure comprises 71 residues: Phosphatidylinositol N-acetylglucosaminyltransferase subunit Y (71 aa).

Methionine 1 is a topological domain (cytoplasmic). Residues 2-21 (FFSLPVLTVLIPLVSLTGLL) form a helical membrane-spanning segment. Residues 22–44 (YSASVEEDFPNGCTSTASLCFYS) lie on the Lumenal side of the membrane. A helical membrane pass occupies residues 45 to 65 (LLLPITLPVYVFFHLWTWMGL). The Cytoplasmic portion of the chain corresponds to 66–71 (KLFRHN).

Component of the glycosylphosphatidylinositol-N-acetylglucosaminyltransferase (GPI-GnT) complex composed at least by PIGA, PIGC, PIGH, PIGP, PIGQ, PIGY and DPM2.

It is found in the endoplasmic reticulum membrane. It participates in glycolipid biosynthesis; glycosylphosphatidylinositol-anchor biosynthesis. In terms of biological role, part of the glycosylphosphatidylinositol-N-acetylglucosaminyltransferase (GPI-GnT) complex that catalyzes the transfer of N-acetylglucosamine from UDP-N-acetylglucosamine to phosphatidylinositol and participates in the first step of GPI biosynthesis. May act by regulating the catalytic subunit PIGA. The chain is Phosphatidylinositol N-acetylglucosaminyltransferase subunit Y from Xenopus tropicalis (Western clawed frog).